A 226-amino-acid chain; its full sequence is Amelogenin (226 aa).

An N-terminal signal peptide occupies residues 1 to 16 (MGTWILFACLLGTAFA). Serine 32 carries the post-translational modification Phosphoserine. Positions 86 to 196 (QQHPPSHTTL…LPPQQALPPM (111 aa)) are disordered. Composition is skewed to low complexity over residues 88-120 (HPPSHTTLPPHHHIPVGPAQQPVVPQQPLMPVP) and 137-182 (PTSQ…SPLH). A compositionally biased stretch (pro residues) spans 183–192 (PIQPLPPQQA).

Belongs to the amelogenin family.

The protein localises to the secreted. The protein resides in the extracellular space. It localises to the extracellular matrix. Functionally, plays a role in the biomineralization of teeth. Seems to regulate the formation of crystallites during the secretory stage of tooth enamel development. Thought to play a major role in the structural organization and mineralization of developing enamel. This chain is Amelogenin (AMEL), found in Cavia porcellus (Guinea pig).